The sequence spans 489 residues: NADH-quinone oxidoreductase subunit N (489 aa).

14 helical membrane-spanning segments follow: residues 15-35 (APLL…VFFI), 44-64 (GYLA…LWGV), 78-98 (FALT…TMSL), 106-126 (IEQG…ILLA), 131-151 (LIVL…LTGF), 166-186 (LVLG…IFGA), 209-229 (LTLL…KVAL), 244-264 (PTPV…AALV), 278-298 (WLPV…LGAV), 306-326 (MLAY…MVAG), 333-353 (AFLF…AVLI), 378-398 (LAVA…MAGF), 412-432 (GLPW…FFYL), and 459-479 (IALA…VFAL).

Belongs to the complex I subunit 2 family. NDH-1 is composed of 14 different subunits. Subunits NuoA, H, J, K, L, M, N constitute the membrane sector of the complex.

The protein localises to the cell membrane. The catalysed reaction is a quinone + NADH + 5 H(+)(in) = a quinol + NAD(+) + 4 H(+)(out). NDH-1 shuttles electrons from NADH, via FMN and iron-sulfur (Fe-S) centers, to quinones in the respiratory chain. The immediate electron acceptor for the enzyme in this species is believed to be ubiquinone. Couples the redox reaction to proton translocation (for every two electrons transferred, four hydrogen ions are translocated across the cytoplasmic membrane), and thus conserves the redox energy in a proton gradient. This is NADH-quinone oxidoreductase subunit N from Chloroflexus aggregans (strain MD-66 / DSM 9485).